A 226-amino-acid polypeptide reads, in one-letter code: Enolase-phosphatase E1 (226 aa).

Belongs to the HAD-like hydrolase superfamily. MasA/MtnC family. In terms of assembly, monomer. The cofactor is Mg(2+).

It catalyses the reaction 5-methylsulfanyl-2,3-dioxopentyl phosphate + H2O = 1,2-dihydroxy-5-(methylsulfanyl)pent-1-en-3-one + phosphate. It functions in the pathway amino-acid biosynthesis; L-methionine biosynthesis via salvage pathway; L-methionine from S-methyl-5-thio-alpha-D-ribose 1-phosphate: step 3/6. The protein operates within amino-acid biosynthesis; L-methionine biosynthesis via salvage pathway; L-methionine from S-methyl-5-thio-alpha-D-ribose 1-phosphate: step 4/6. In terms of biological role, bifunctional enzyme that catalyzes the enolization of 2,3-diketo-5-methylthiopentyl-1-phosphate (DK-MTP-1-P) into the intermediate 2-hydroxy-3-keto-5-methylthiopentenyl-1-phosphate (HK-MTPenyl-1-P), which is then dephosphorylated to form the acireductone 1,2-dihydroxy-3-keto-5-methylthiopentene (DHK-MTPene). The protein is Enolase-phosphatase E1 of Shewanella baltica (strain OS155 / ATCC BAA-1091).